A 193-amino-acid chain; its full sequence is Cysteine and glycine-rich protein 1 (193 aa).

The region spanning 10-61 (CGVCQKTVYFAEEVQCEGNSFHKSCFLCMVCKKNLDSTTVAVHGEEIYCKSC) is the LIM zinc-binding 1 domain. The Nuclear localization signal motif lies at 64–69 (KKYGPK). Serine 81 carries the phosphoserine modification. An N6-acetyllysine modification is found at lysine 84. A Glycyl lysine isopeptide (Lys-Gly) (interchain with G-Cter in SUMO2) cross-link involves residue lysine 91. N6-acetyllysine occurs at positions 112, 131, 137, and 161. An LIM zinc-binding 2 domain is found at 119–170 (CPRCSQAVYAAEKVIGAGKSWHKSCFRCAKCGKGLESTTLADKDGEIYCKGC). At serine 192 the chain carries Phosphoserine.

Interacts with ASCC1; ASCC2 and TRIP4.

The protein localises to the nucleus. In terms of biological role, could play a role in neuronal development. This chain is Cysteine and glycine-rich protein 1 (Csrp1), found in Mus musculus (Mouse).